The sequence spans 125 residues: MTGATLTVRVIRNFEYRTLKNVVFHDIDLATTTVDQFKKIIDERIQTDPSLKIYRTTHFDTLKIYVKAQQHKTQNLAINLDHDDWILNDGAKTLSLCGIENETELSYFELAAYKAYQANPVQKWL.

The protein belongs to the UPF0538 family.

The chain is UPF0538 protein C2C4.04c from Schizosaccharomyces pombe (strain 972 / ATCC 24843) (Fission yeast).